Reading from the N-terminus, the 115-residue chain is Iron-sulfur cluster insertion protein ErpA (115 aa).

Residues cysteine 43, cysteine 107, and cysteine 109 each coordinate iron-sulfur cluster.

This sequence belongs to the HesB/IscA family. In terms of assembly, homodimer. Iron-sulfur cluster is required as a cofactor.

In terms of biological role, required for insertion of 4Fe-4S clusters for at least IspG. The polypeptide is Iron-sulfur cluster insertion protein ErpA (Buchnera aphidicola subsp. Baizongia pistaciae (strain Bp)).